The chain runs to 222 residues: Small ribosomal subunit protein uS7m (222 aa).

This sequence belongs to the universal ribosomal protein uS7 family. As to quaternary structure, part of the small ribosomal subunit.

The protein localises to the mitochondrion. In terms of biological role, one of the primary rRNA binding proteins, it binds directly to 18S rRNA where it nucleates assembly of the head domain of the small subunit. The sequence is that of Small ribosomal subunit protein uS7m (RPS7) from Prototheca wickerhamii.